Reading from the N-terminus, the 448-residue chain is FAD-linked oxidoreductase nodO (448 aa).

An FAD-binding PCMH-type domain is found at 35–206 (PEHFPLAIVK…IRFFLKTCPL (172 aa)).

Belongs to the oxygen-dependent FAD-linked oxidoreductase family. FAD serves as cofactor.

It participates in secondary metabolite biosynthesis. Its function is as follows. FAD-linked oxidoreductase; part of the gene cluster that mediates the biosynthesis of the indole diterpenes nodulisporic acids (NA). Nodulisporic acid A (NAA) and its chemically modified derivatives are of particular significance because of their highly potent insecticidal activity against blood-feeding arthropods and lack of observable adverse effects on mammals, in particular the tremogenicity associated with the paspaline-derived IDTs is not observed. The geranylgeranyl diphosphate (GGPP) synthase ggs1, localized outside of the cluster, is proposed to catalyze the first step in nodulisporic acid biosynthesis via conversion of farnesyl pyrophosphate and isopentyl pyrophosphate into geranylgeranyl pyrophosphate (GGPP). Condensation of indole-3-glycerol phosphate with GGPP by the prenyl transferase nodC then forms 3-geranylgeranylindole (3-GGI). Epoxidation by the FAD-dependent monooxygenase nodM leads to a single-epoxidized-GGI that is substrate of the terpene cyclase nodB for cyclization to yield emindole SB. The terminal methyl carbon, C28, of emindole SB is then oxidized by the cytochrome P450 monooxygenase nodW to produce nodulisporic acid F (NAF), the pentacyclic core of NAA. NAF is converted to nodulisporic acid E (NAE) via prenylation. This step is probably performed by one of the indole diterpene prenyltransferases nodD1 or nodD2. Several oxidation steps performed by the FAD-linked oxidoreductase nodO and one of the cytochrome P450 monooxygenase nodR, nodX or nodZ further convert NAE to nodulisporic acid D (NAD). NAD is substrate of cytochrome P450 monooxygenase nodJ to produce the precursor of nodulisporic acid C (NAC), converted to NAC by one of the indole diterpene prenyltransferases nodD1 or nodD2. The FAD-dependent monooxygenase nodY2 then oxidizes NAC to nodulisporic acid B (NAB). Finally NAB is converted to NAA by one of the cytochrome P450 monooxygenases nodR, nodX or nodZ. This Hypoxylon pulicicidum protein is FAD-linked oxidoreductase nodO.